Reading from the N-terminus, the 1088-residue chain is Pathogenesis-related homeodomain protein (1088 aa).

A run of 8 repeats spans residues 140-152, 173-199, 205-239, 240-274, 283-295, 316-342, 348-382, and 383-417. Positions 140–295 are 2 X 13 AA repeats; it reads INMGQKETMP…EQKETIPEQV (156 aa). The tract at residues 173–342 is 2 X 27 AA approximate repeats; the sequence is NSYQSGLPPE…HAQFGHQSDD (170 aa). Residues 205-274 are 2 X 35 AA approximate tandem repeats (type C); it reads GLVELVIGQK…SRGRPRKVQN (70 aa). Residues 220–282 are disordered; it reads PSQLVETGKR…QNSPTSFLEN (63 aa). DNA-binding regions (a.T hook) lie at residues 226-236 and 261-271; these read TGKRGRGRPRK and TGKRSRGRPRK. Residues 272-282 are compositionally biased toward polar residues; that stretch reads VQNSPTSFLEN. A compositionally biased stretch (polar residues) spans 303–320; that stretch reads SLTIPTDNQSRTYNSDQS. Disordered stretches follow at residues 303 to 343 and 363 to 484; these read SLTI…SDDT and PSQL…RMEE. The segment at 348–417 is 2 X 35 AA approximate tandem repeats (type C); it reads GFKELVIGQE…SRGRPRKVQD (70 aa). 2 consecutive DNA-binding regions (a.T hook) follow at residues 369–379 and 404–414; these read AGKRGRGRPRK and TGKRSRGRPRK. Residues 578 to 635 form a PHD-type zinc finger; sequence DIFCAKCGSKDVTLSNDIILCDGACDRGFHQFCLDPPLLKEYIPPDDEGWLCPGCECK. Disordered regions lie at residues 667-810 and 851-901; these read AASG…PLYP and EEYG…ARES. A 4-1 repeat occupies 678–693; sequence GLPSDDSEDDDYDPGG. Residues 678 to 744 form a 2 X 16 AA Asp/Glu-rich (acidic) repeats region; sequence GLPSDDSEDD…SEDDEYDPSG (67 aa). The span at 705–718 shows a compositional bias: acidic residues; sequence SSTDESDYQSESDD. The stretch at 729–744 is one 4-2 repeat; it reads GLPSDDSEDDEYDPSG. Basic and acidic residues-rich tracts occupy residues 788 to 802 and 874 to 901; these read DHVR…HPEQ and NNSD…ARES. A DNA-binding region (homeobox) is located at residues 935–994; it reads KSTSKTLHGEHATQRLLQSFKENQYPQRAVKESLAAELALSVRQVSNWFNNRRWSFRHSS.

The protein belongs to the PHD-associated homeobox family.

The protein resides in the nucleus. Functionally, specifically binds to the fungal elicitor-responsive DNA element, 5'-CTAATTGTTTA-3', of the gene PR2 promoter. The sequence is that of Pathogenesis-related homeodomain protein (PRH) from Petroselinum crispum (Parsley).